Consider the following 205-residue polypeptide: Adenylyl-sulfate kinase (205 aa).

31 to 38 (GLSGSGKS) is a binding site for ATP. The active-site Phosphoserine intermediate is the Ser105.

The protein belongs to the APS kinase family.

It carries out the reaction adenosine 5'-phosphosulfate + ATP = 3'-phosphoadenylyl sulfate + ADP + H(+). It participates in sulfur metabolism; hydrogen sulfide biosynthesis; sulfite from sulfate: step 2/3. Functionally, catalyzes the synthesis of activated sulfate. The polypeptide is Adenylyl-sulfate kinase (Shewanella pealeana (strain ATCC 700345 / ANG-SQ1)).